Reading from the N-terminus, the 967-residue chain is Isoleucine--tRNA ligase (967 aa).

A 'HIGH' region motif is present at residues 64 to 74; that stretch reads PYANGNIHIGH. E600 contributes to the L-isoleucyl-5'-AMP binding site. Residues 641-645 carry the 'KMSKS' region motif; that stretch reads KQSKS. K644 contributes to the ATP binding site.

The protein belongs to the class-I aminoacyl-tRNA synthetase family. IleS type 1 subfamily. Monomer.

The protein resides in the cytoplasm. It carries out the reaction tRNA(Ile) + L-isoleucine + ATP = L-isoleucyl-tRNA(Ile) + AMP + diphosphate. In terms of biological role, catalyzes the attachment of isoleucine to tRNA(Ile). As IleRS can inadvertently accommodate and process structurally similar amino acids such as valine, to avoid such errors it has two additional distinct tRNA(Ile)-dependent editing activities. One activity is designated as 'pretransfer' editing and involves the hydrolysis of activated Val-AMP. The other activity is designated 'posttransfer' editing and involves deacylation of mischarged Val-tRNA(Ile). This is Isoleucine--tRNA ligase from Agrobacterium fabrum (strain C58 / ATCC 33970) (Agrobacterium tumefaciens (strain C58)).